We begin with the raw amino-acid sequence, 716 residues long: Putative mannosyltransferase YkcB (716 aa).

The next 8 helical transmembrane spans lie at 8–28 (LDIV…YNIW), 44–64 (MMQS…FITV), 87–107 (SVIL…YLLI), 118–135 (IASF…VART), 137–157 (NVDA…FKAI), 159–179 (KGKL…FNTK), 180–200 (MLQA…AANA), and 206–226 (IVSL…WPLI). The interval 260-363 (TGQNSGGGQG…GSGMFGTGTP (104 aa)) is disordered. Positions 278 to 289 (EMSSSDNTQAPP) are enriched in polar residues. The span at 290–307 (NQSSSNSSSSDGKSSNGN) shows a compositional bias: low complexity. The span at 318-347 (PSGGQGGPPSGGDGGQGGPGGDGGKGGTGT) shows a compositional bias: gly residues. A run of 6 helical transmembrane segments spans residues 376–396 (QISW…IAGA), 409–429 (TVFW…AEFF), 433–453 (YLIM…VALV), 462–482 (WKAW…LFIL), 491–511 (VGWS…LLLF), and 518–538 (FSYY…MYWA). A disordered region spans residues 664–716 (VASEKWQSSSDQKTENTDSADTSSSKASGENGKMGGPGGMNQSATLYELHADE). Positions 680–694 (TDSADTSSSKASGEN) are enriched in low complexity.

The protein belongs to the glycosyltransferase 39 family.

It is found in the cell membrane. The polypeptide is Putative mannosyltransferase YkcB (ykcB) (Bacillus subtilis (strain 168)).